A 132-amino-acid chain; its full sequence is Global transcriptional regulator Spx 2 (132 aa).

Cysteine 10 and cysteine 13 are disulfide-bonded.

It belongs to the ArsC family. Spx subfamily. As to quaternary structure, interacts with the C-terminal domain of the alpha subunit of the RNAP.

It localises to the cytoplasm. Its function is as follows. Global transcriptional regulator that plays a key role in stress response and exerts either positive or negative regulation of genes. Acts by interacting with the C-terminal domain of the alpha subunit of the RNA polymerase (RNAP). This interaction can enhance binding of RNAP to the promoter region of target genes and stimulate their transcription, or block interaction of RNAP with activator. The chain is Global transcriptional regulator Spx 2 from Lactococcus lactis subsp. lactis (strain IL1403) (Streptococcus lactis).